Here is a 316-residue protein sequence, read N- to C-terminus: tRNA dimethylallyltransferase (316 aa).

Residue 13 to 20 (GPTAVGKT) participates in ATP binding. 15–20 (TAVGKT) is a binding site for substrate. An interaction with substrate tRNA region spans residues 38–41 (DSIQ).

The protein belongs to the IPP transferase family. Monomer. It depends on Mg(2+) as a cofactor.

The enzyme catalyses adenosine(37) in tRNA + dimethylallyl diphosphate = N(6)-dimethylallyladenosine(37) in tRNA + diphosphate. In terms of biological role, catalyzes the transfer of a dimethylallyl group onto the adenine at position 37 in tRNAs that read codons beginning with uridine, leading to the formation of N6-(dimethylallyl)adenosine (i(6)A). The sequence is that of tRNA dimethylallyltransferase from Staphylococcus carnosus (strain TM300).